We begin with the raw amino-acid sequence, 208 residues long: Uracil phosphoribosyltransferase (208 aa).

Residues arginine 78, arginine 103, and 130 to 138 (DPMLATGGS) contribute to the 5-phospho-alpha-D-ribose 1-diphosphate site. Uracil contacts are provided by residues isoleucine 193 and 198 to 200 (GDA). Residue aspartate 199 coordinates 5-phospho-alpha-D-ribose 1-diphosphate.

Belongs to the UPRTase family. Mg(2+) is required as a cofactor.

It catalyses the reaction UMP + diphosphate = 5-phospho-alpha-D-ribose 1-diphosphate + uracil. The protein operates within pyrimidine metabolism; UMP biosynthesis via salvage pathway; UMP from uracil: step 1/1. With respect to regulation, allosterically activated by GTP. In terms of biological role, catalyzes the conversion of uracil and 5-phospho-alpha-D-ribose 1-diphosphate (PRPP) to UMP and diphosphate. In Trichlorobacter lovleyi (strain ATCC BAA-1151 / DSM 17278 / SZ) (Geobacter lovleyi), this protein is Uracil phosphoribosyltransferase.